The sequence spans 319 residues: ATP-dependent 6-phosphofructokinase (319 aa).

Gly-11 is an ATP binding site. 21-25 is an ADP binding site; that stretch reads RAAVR. ATP is bound by residues 72-73 and 102-105; these read RS and GDGS. Asp-103 lines the Mg(2+) pocket. 125-127 provides a ligand contact to substrate; that stretch reads TID. The active-site Proton acceptor is Asp-127. Arg-154 contacts ADP. Substrate-binding positions include Arg-162 and 169-171; that span reads MGR. ADP contacts are provided by residues 185–187, Arg-211, and 213–215; these read GAE and KKH. Substrate is bound by residues Glu-222, Arg-243, and 249-252; that span reads HIQR.

This sequence belongs to the phosphofructokinase type A (PFKA) family. ATP-dependent PFK group I subfamily. Prokaryotic clade 'B1' sub-subfamily. Homotetramer. Mg(2+) is required as a cofactor.

The protein localises to the cytoplasm. The enzyme catalyses beta-D-fructose 6-phosphate + ATP = beta-D-fructose 1,6-bisphosphate + ADP + H(+). It functions in the pathway carbohydrate degradation; glycolysis; D-glyceraldehyde 3-phosphate and glycerone phosphate from D-glucose: step 3/4. Allosterically activated by ADP and other diphosphonucleosides, and allosterically inhibited by phosphoenolpyruvate. Its function is as follows. Catalyzes the phosphorylation of D-fructose 6-phosphate to fructose 1,6-bisphosphate by ATP, the first committing step of glycolysis. This Brevibacillus brevis (strain 47 / JCM 6285 / NBRC 100599) protein is ATP-dependent 6-phosphofructokinase.